Reading from the N-terminus, the 195-residue chain is Adenylate kinase (195 aa).

Residue 10-15 (GSGKGT) participates in ATP binding. The interval 30-59 (STGDILRAERAAGTLLGQQAQSYMDRGELV) is NMP. Residues Thr31, Arg36, 57–59 (ELV), 85–88 (GFPR), and Gln92 each bind AMP. The interval 126 to 140 (NRAKQAVNGQQRSDD) is LID. Arg127 is an ATP binding site. The AMP site is built by Arg137 and Arg148. ATP is bound at residue Arg176.

It belongs to the adenylate kinase family. Monomer.

The protein resides in the cytoplasm. The catalysed reaction is AMP + ATP = 2 ADP. It functions in the pathway purine metabolism; AMP biosynthesis via salvage pathway; AMP from ADP: step 1/1. Functionally, catalyzes the reversible transfer of the terminal phosphate group between ATP and AMP. Plays an important role in cellular energy homeostasis and in adenine nucleotide metabolism. The protein is Adenylate kinase of Thermosynechococcus vestitus (strain NIES-2133 / IAM M-273 / BP-1).